The chain runs to 255 residues: Small ribosomal subunit protein eS1 (255 aa).

An N-acetylalanine; partial modification is found at alanine 2.

It belongs to the eukaryotic ribosomal protein eS1 family. Component of the small ribosomal subunit. Mature ribosomes consist of a small (40S) and a large (60S) subunit. The 40S subunit contains about 33 different proteins and 1 molecule of RNA (18S). The 60S subunit contains about 49 different proteins and 3 molecules of RNA (25S, 5.8S and 5S).

It is found in the cytoplasm. The polypeptide is Small ribosomal subunit protein eS1 (Vanderwaltozyma polyspora (strain ATCC 22028 / DSM 70294 / BCRC 21397 / CBS 2163 / NBRC 10782 / NRRL Y-8283 / UCD 57-17) (Kluyveromyces polysporus)).